We begin with the raw amino-acid sequence, 426 residues long: D-tagatose-1,6-bisphosphate aldolase subunit KbaZ (426 aa).

This sequence belongs to the GatZ/KbaZ family. KbaZ subfamily. In terms of assembly, forms a complex with KbaY.

It participates in carbohydrate metabolism; D-tagatose 6-phosphate degradation; D-glyceraldehyde 3-phosphate and glycerone phosphate from D-tagatose 6-phosphate: step 2/2. Its function is as follows. Component of the tagatose-1,6-bisphosphate aldolase KbaYZ that is required for full activity and stability of the Y subunit. Could have a chaperone-like function for the proper and stable folding of KbaY. When expressed alone, KbaZ does not show any aldolase activity. In Escherichia coli O81 (strain ED1a), this protein is D-tagatose-1,6-bisphosphate aldolase subunit KbaZ.